Consider the following 1210-residue polypeptide: ATPase family AAA domain-containing protein At1g05910 (1210 aa).

Positions 1-11 are enriched in polar residues; the sequence is MHPKRSSQGDG. 2 disordered regions span residues 1 to 32 and 63 to 291; these read MHPK…LHGR and LHKG…RTDD. The segment covering 97-109 has biased composition (acidic residues); that stretch reads DYTDSSGAEDEDM. Basic and acidic residues predominate over residues 130–146; sequence SRKDMDAELAPRREGLR. Over residues 167–226 the composition is skewed to acidic residues; it reads DTSEEKDGQDETENGNELDDADDGENEVEAEDEGNGEDEGDGEDEGEEDGDDDEEGDEEQ. Residues 227–244 show a composition bias toward basic and acidic residues; the sequence is EGRKRYDLRNRAEVRRMP. A compositionally biased stretch (basic residues) spans 276-286; that stretch reads GGSRPHKRHRF. 422-429 contributes to the ATP binding site; sequence GPPGTGKT. The segment at 856 to 883 is disordered; that stretch reads LNGKPDGPQPLPELPKVPKEPTGPKPAE. One can recognise a Bromo domain in the interval 897-1000; sequence RLRMCLRDVC…DVVHGMLSQM (104 aa). A compositionally biased stretch (basic and acidic residues) spans 1057-1070; sequence DRDYEGLKKPKKTT. A disordered region spans residues 1057 to 1151; it reads DRDYEGLKKP…EISSRTESVK (95 aa). Positions 1080–1090 are enriched in polar residues; it reads DKSQNQDSGQE. 2 stretches are compositionally biased toward basic and acidic residues: residues 1108–1123 and 1138–1151; these read DGDR…KEAS and KSDK…ESVK.

This sequence belongs to the AAA ATPase family.

The sequence is that of ATPase family AAA domain-containing protein At1g05910 from Arabidopsis thaliana (Mouse-ear cress).